Consider the following 358-residue polypeptide: Valine dehydrogenase (358 aa).

The active site involves Lys88. 188-194 is a binding site for NAD(+); the sequence is GVGKVGH.

This sequence belongs to the Glu/Leu/Phe/Val dehydrogenases family. In terms of assembly, homodimer.

Its subcellular location is the cytoplasm. It carries out the reaction L-valine + NAD(+) + H2O = 3-methyl-2-oxobutanoate + NH4(+) + NADH + H(+). It participates in amino-acid degradation; L-valine degradation. Functionally, oxidative deamination of branched-chain amino acids. The catabolism of valine is the major source of fatty acid precursors for macrolide biosynthesis and a vital source of antibiotic precursors. The protein is Valine dehydrogenase (vdh) of Streptomyces virginiae (Streptomyces cinnamonensis).